Here is a 454-residue protein sequence, read N- to C-terminus: UDP-N-acetylmuramoylalanine--D-glutamate ligase (454 aa).

114-120 is a binding site for ATP; it reads GTNGKTT.

It belongs to the MurCDEF family.

Its subcellular location is the cytoplasm. It catalyses the reaction UDP-N-acetyl-alpha-D-muramoyl-L-alanine + D-glutamate + ATP = UDP-N-acetyl-alpha-D-muramoyl-L-alanyl-D-glutamate + ADP + phosphate + H(+). The protein operates within cell wall biogenesis; peptidoglycan biosynthesis. In terms of biological role, cell wall formation. Catalyzes the addition of glutamate to the nucleotide precursor UDP-N-acetylmuramoyl-L-alanine (UMA). The protein is UDP-N-acetylmuramoylalanine--D-glutamate ligase of Desulfitobacterium hafniense (strain DSM 10664 / DCB-2).